The chain runs to 253 residues: Small ribosomal subunit protein uS3 (253 aa).

One can recognise a KH type-2 domain in the interval 39-107; the sequence is VRRALKKRLY…EVHLNIVEIR (69 aa). A disordered region spans residues 215-253; that stretch reads LDKRLAGESGPAGEGGGRERGDRPDRGPRRERRGEPSNA. Residues 230-253 show a composition bias toward basic and acidic residues; that stretch reads GGRERGDRPDRGPRRERRGEPSNA.

Belongs to the universal ribosomal protein uS3 family. Part of the 30S ribosomal subunit. Forms a tight complex with proteins S10 and S14.

In terms of biological role, binds the lower part of the 30S subunit head. Binds mRNA in the 70S ribosome, positioning it for translation. In Phenylobacterium zucineum (strain HLK1), this protein is Small ribosomal subunit protein uS3.